The sequence spans 1082 residues: Integrator complex subunit 3 homolog (1082 aa).

Disordered regions lie at residues 483–563 (PGPP…VSDD), 923–945 (YPSNSPNKRKRPSKSAQQNTAPT), and 1005–1082 (DETS…SDSD). Composition is skewed to low complexity over residues 517-528 (PAAKAASTAASA) and 542-555 (TKPATTTTTTTTTT). Positions 936–945 (KSAQQNTAPT) are enriched in polar residues. 2 stretches are compositionally biased toward low complexity: residues 1008-1018 (STTVGRRGTSS) and 1033-1056 (EKAAAAAAAAHANNSKKAAEASAK).

It belongs to the Integrator subunit 3 family. As to quaternary structure, belongs to the multiprotein complex Integrator. The core complex associates with protein phosphatase 2A subunits, to form the Integrator-PP2A (INTAC) complex.

The protein localises to the nucleus. It localises to the cytoplasm. Component of the integrator complex, a multiprotein complex that terminates RNA polymerase II (Pol II) transcription in the promoter-proximal region of genes. The integrator complex provides a quality checkpoint during transcription elongation by driving premature transcription termination of transcripts that are unfavorably configured for transcriptional elongation: the complex terminates transcription by (1) catalyzing dephosphorylation of the C-terminal domain (CTD) of Pol II subunit Polr2A/Rbp1 and Spt5, and (2) degrading the exiting nascent RNA transcript via endonuclease activity. The integrator complex is also involved in the 3'-end processing of the U7 snRNA, and also the spliceosomal snRNAs U1, U2, U4 and U5. The polypeptide is Integrator complex subunit 3 homolog (Anopheles gambiae (African malaria mosquito)).